The sequence spans 1611 residues: DNA (cytosine-5)-methyltransferase 1 (1611 aa).

Residues 1-120 (MPARTAPARV…SQTSGEDCRV (120 aa)) are interaction with DMAP1. Positions 1–148 (MPARTAPARV…RRSKSDGETK (148 aa)) are interaction with DNMT3A. 2 interaction with the PRC2/EED-EZH2 complex regions span residues 1–334 (MPAR…TEKK) and 306–603 (KPQV…TIRQ). S15 carries the post-translational modification Phosphoserine. Residues 16–109 (RAFSLPDDVR…SREANGCLEN (94 aa)) form the DMAP1-binding domain. K70 carries the post-translational modification N6,N6-dimethyllysine; by EHMT2. The tract at residues 123–328 (AEKGKPPKPV…EEKRRRTTYR (206 aa)) is disordered. Position 133 is a phosphoserine (S133). T137 bears the Phosphothreonine mark. At S141 the chain carries Phosphoserine. Residue K142 is modified to N6-methyllysine; by SETD7. Position 143 is a phosphoserine; by PKB/AKT1 (S143). Residues 149–216 (SEVSSSPRIT…TSRERVAGLL (68 aa)) form an interaction with DNMT3B region. Phosphoserine is present on residues S152 and S154. An N6-acetyllysine modification is found at K160. An interaction with PCNA region spans residues 163–174 (RQTTITSHFPRG). Low complexity predominate over residues 163–174 (RQTTITSHFPRG). T166 bears the Phosphothreonine mark. The Nuclear localization signal signature appears at 177-204 (KRKPEEEPEKVKSDDSVDEEKDQEEKRR). Basic and acidic residues-rich tracts occupy residues 178 to 191 (RKPEEEPEKVKSDD), 199 to 212 (QEEKRRRVTSRERV), 220 to 265 (EPGR…RDVR), 279 to 311 (KDEKRHRSQPKDLASKRRPEEKEPERVKPQVSD), and 319 to 328 (EEKRRRTTYR). The residue at position 188 (K188) is an N6-acetyllysine. K257 is subject to N6-acetyllysine; alternate. A Glycyl lysine isopeptide (Lys-Gly) (interchain with G-Cter in SUMO2); alternate cross-link involves residue K257. Residue S310 is modified to Phosphoserine. Residues 329–548 (ELTEKKMTRT…NLNRFTEDSL (220 aa)) are DNA replication foci-targeting sequence. Residues C351 and C354 each coordinate Zn(2+). S392 and S396 each carry phosphoserine. Zn(2+) contacts are provided by C412 and H416. S507 and S547 each carry phosphoserine. The disordered stretch occupies residues 594 to 614 (RAERRQTIRQPAKEKDKGPTK). Residues 643–689 (NAFKRRRCGVCEICQQPECGKCKACKDMVKFGGSGRSKQACQKRRCP) form a CXXC-type zinc finger. Positions 650, 653, 656, 661, 664, 667, 683, and 688 each coordinate Zn(2+). Residues 690–751 (NMAMKEADDD…SYYKKVCIDS (62 aa)) are autoinhibitory linker. Residues 695–726 (EADDDEEVDDNIPEMPSPKKMHQGKKKKQNKN) are disordered. Acidic residues predominate over residues 696–706 (ADDDEEVDDNI). Position 711 is a phosphoserine (S711). Positions 713-725 (KKMHQGKKKKQNK) are enriched in basic residues. Phosphoserine is present on S729. K746 bears the N6-acetyllysine mark. A BAH 1 domain is found at 752-877 (ETLEVGDCVS…QDYARFESPP (126 aa)). Position 875 is a phosphoserine (S875). K888, K954, K958, K972, and K1051 each carry N6-acetyllysine. In terms of domain architecture, BAH 2 spans 969 to 1097 (HYRKYSDYIK…AKSKSFEDPP (129 aa)). Residues 1091–1126 (KSFEDPPNHARSTGNKGKGKGKGKNRTKSQTCEPSE) are disordered. Tandem repeats lie at residues 1106 to 1107 (KG), 1108 to 1109 (KG), 1110 to 1111 (KG), and 1112 to 1113 (KG). The segment at 1106–1115 (KGKGKGKGKN) is 5 X 2 AA tandem repeats of K-G. Over residues 1107-1117 (GKGKGKGKNRT) the composition is skewed to basic residues. N6-acetyllysine occurs at positions 1108, 1110, 1112, 1114, and 1118. Residues 1114-1115 (KN) form a 5; approximate repeat. Residues 1118–1611 (KSQTCEPSEL…AKIKEEAAKD (494 aa)) form an interaction with the PRC2/EED-EZH2 complex region. An SAM-dependent MTase C5-type domain is found at 1136–1595 (LRTLDVFSGC…LEIKRCMLAK (460 aa)). A catalytic region spans residues 1136 to 1611 (LRTLDVFSGC…AKIKEEAAKD (476 aa)). S-adenosyl-L-methionine-binding positions include S1143, 1147-1148 (GL), 1165-1166 (EM), 1187-1188 (DC), and C1188. C1223 is a catalytic residue. An N6-acetyllysine mark is found at K1346 and K1412. 2 residues coordinate S-adenosyl-L-methionine: N1574 and V1576. Residue K1605 forms a Glycyl lysine isopeptide (Lys-Gly) (interchain with G-Cter in SUMO2) linkage.

The protein belongs to the class I-like SAM-binding methyltransferase superfamily. C5-methyltransferase family. Homodimer. Forms a stable complex with E2F1, BB1 and HDAC1. Forms a complex with DMAP1 and HDAC2, with direct interaction. Interacts with the PRC2/EED-EZH2 complex. Probably part of a corepressor complex containing ZNF304, TRIM28, SETDB1 and DNMT1. Interacts with UHRF1; promoting its recruitment to hemimethylated DNA. Interacts with USP7, promoting its deubiquitination. Interacts with PCNA. Interacts with MBD2 and MBD3. Interacts with DNMT3A and DNMT3B. Interacts with UBC9. Interacts with CSNK1D. Interacts with HDAC1. Interacts with BAZ2A/TIP5. Interacts with SIRT7. Interacts with ZNF263; recruited to the SIX3 promoter along with other proteins involved in chromatin modification and transcriptional corepression where it contributes to transcriptional repression. Interacts with L3MBTL3 and DCAF5; the interaction requires DNMT1 methylation at Lys-142 and is necessary to target DNMT1 for ubiquitination by the CRL4-DCAF5 E3 ubiquitin ligase complex and proteasomal degradation. Interacts with PHF20L1; the interaction requires DNMT1 methylation at Lys-142 and protects DNMT1 from ubiquitination and proteasomal degradation. Post-translationally, sumoylated; sumoylation increases activity. Acetylation on multiple lysines, mainly by KAT2B/PCAF, regulates cell cycle G(2)/M transition. Deacetylation of Lys-1346 and Lys-1412 by SIRT1 increases methyltransferase activity. In terms of processing, phosphorylation of Ser-154 by CDKs is important for enzymatic activity and protein stability. Phosphorylation of Ser-143 by AKT1 prevents methylation by SETD7 thereby increasing DNMT1 stability. Post-translationally, methylation at Lys-142 by SETD7 is necessary for the regulation of DNMT1 proteasomal degradation. Ubiquitinated by UHRF1; interaction with USP7 counteracts ubiquitination by UHRF1 by promoting deubiquitination and preventing degradation by the proteasome.

It localises to the nucleus. The catalysed reaction is a 2'-deoxycytidine in DNA + S-adenosyl-L-methionine = a 5-methyl-2'-deoxycytidine in DNA + S-adenosyl-L-homocysteine + H(+). Methylates CpG residues. Preferentially methylates hemimethylated DNA. Associates with DNA replication sites in S phase maintaining the methylation pattern in the newly synthesized strand, that is essential for epigenetic inheritance. Associates with chromatin during G2 and M phases to maintain DNA methylation independently of replication. It is responsible for maintaining methylation patterns established in development. DNA methylation is coordinated with methylation of histones. Mediates transcriptional repression by direct binding to HDAC2. In association with DNMT3B and via the recruitment of CTCFL/BORIS, involved in activation of BAG1 gene expression by modulating dimethylation of promoter histone H3 at H3K4 and H3K9. Probably forms a corepressor complex required for activated KRAS-mediated promoter hypermethylation and transcriptional silencing of tumor suppressor genes (TSGs) or other tumor-related genes in colorectal cancer (CRC) cells. Also required to maintain a transcriptionally repressive state of genes in undifferentiated embryonic stem cells (ESCs). Associates at promoter regions of tumor suppressor genes (TSGs) leading to their gene silencing. Promotes tumor growth. The protein is DNA (cytosine-5)-methyltransferase 1 (DNMT1) of Bos taurus (Bovine).